We begin with the raw amino-acid sequence, 90 residues long: Acylphosphatase (90 aa).

Residues 3–90 (KKQFVVYGIV…HSFGLFSVEH (88 aa)) form the Acylphosphatase-like domain. Catalysis depends on residues R18 and N36.

The protein belongs to the acylphosphatase family.

The catalysed reaction is an acyl phosphate + H2O = a carboxylate + phosphate + H(+). The polypeptide is Acylphosphatase (acyP) (Mannheimia succiniciproducens (strain KCTC 0769BP / MBEL55E)).